Here is a 786-residue protein sequence, read N- to C-terminus: Progesterone receptor (786 aa).

The span at 1 to 10 (MTEVKSKETR) shows a compositional bias: basic and acidic residues. 3 disordered regions span residues 1-95 (MTEV…SKDC), 110-212 (AAPW…ASPA), and 252-279 (SAFG…DGKE). Residues 1 to 420 (MTEVKSKETR…YSFESLPQKI (420 aa)) form a modulating, Pro-Rich region. A Glycyl lysine isopeptide (Lys-Gly) (interchain with G-Cter in SUMO) cross-link involves residue Lys7. Positions 48 to 79 (DEEEEEEENEEEEEEEEPQQREEEEEEEEEDR) are enriched in acidic residues. Residues 143–154 (APGPSQPRPGAP) show a composition bias toward pro residues. Over residues 186 to 197 (AEERGFPERDAG) the composition is skewed to basic and acidic residues. The span at 203–212 (LAPAAAASPA) shows a compositional bias: low complexity. Ser210 and Ser259 each carry phosphoserine. A Glycyl lysine isopeptide (Lys-Gly) (interchain with G-Cter in SUMO); alternate cross-link involves residue Lys294. A Glycyl lysine isopeptide (Lys-Gly) (interchain with G-Cter in ubiquitin); alternate cross-link involves residue Lys294. Residue Lys385 forms a Glycyl lysine isopeptide (Lys-Gly) (interchain with G-Cter in SUMO) linkage. 2 NR C4-type zinc fingers span residues 421 to 441 (CLIC…CGSC) and 457 to 481 (CAGR…LRKC). Positions 421-486 (CLICGDEASG…RLRKCCQAGM (66 aa)) form a DNA-binding region, nuclear receptor. Position 529 is a phosphoserine (Ser529). In terms of domain architecture, NR LBD spans 532–766 (QEIPFVPPMI…EFPEMMSEVI (235 aa)).

Belongs to the nuclear hormone receptor family. NR3 subfamily. Phosphorylation of Ser-529 is sharply increased upon progesterone treatment, whereas phosphorylation of Ser-210 and Ser-259 is modestly induced by progesterone. Post-translationally, ubiquitinated. Ubiquitination is increased by progesterone and represses sumoylation at the same site. In terms of processing, sumoylation is hormone-dependent and represses transcriptional activity. Sumoylation on all three sites is enhanced by PIAS3. Desumoylated by SENP1. Sumoylation on Lys-385, the main site of sumoylation, is repressed by ubiquitination on the same site. In terms of tissue distribution, oviduct and bursa of Fabricius.

Its subcellular location is the nucleus. The protein resides in the cytoplasm. Functionally, the steroid hormones and their receptors are involved in the regulation of eukaryotic gene expression and affect cellular proliferation and differentiation in target tissues. The polypeptide is Progesterone receptor (PGR) (Gallus gallus (Chicken)).